Consider the following 1719-residue polypeptide: Serine/threonine-protein kinase MRCK alpha (1719 aa).

In terms of domain architecture, Protein kinase spans 77-343 (FEILKVIGRG…IEDFKKHPFF (267 aa)). Residues 83 to 91 (IGRGAFGEV) and K106 each bind ATP. D201 functions as the Proton acceptor in the catalytic mechanism. Phosphoserine; by autocatalysis is present on residues S222 and S234. Position 240 is a phosphothreonine; by autocatalysis (T240). The 71-residue stretch at 344 to 414 (SGIDWDNIRN…TSSCVLSDRS (71 aa)) folds into the AGC-kinase C-terminal domain. Coiled coils occupy residues 437–670 (NNLA…KQKQ), 713–820 (SEIK…WEAQ), and 880–943 (LELQ…SEKG). Residues 999-1049 (THQFFVKSFTAPTKCHQCTSLMVGLIRQGCSCEVCGFSCHITCVNKAPTVC) form a Phorbol-ester/DAG-type zinc finger. The PH domain occupies 1069 to 1188 (GTAYEGHVRI…WVGVLSELHK (120 aa)). A CNH domain is found at 1214 to 1486 (IKTTQAAAII…RPLNTEGSLN (273 aa)). Residue S1532 is modified to Phosphoserine. The CRIB domain maps to 1558-1571 (ISNPTNFNHIAHMG). The tract at residues 1579 to 1719 (LKDLPMNPRP…ESTDRGSWDP (141 aa)) is disordered. A compositionally biased stretch (polar residues) spans 1591–1606 (SRTVFSGSVSIPSITK). Residues S1598, S1600, S1616, S1638, S1651, S1656, S1680, S1706, and S1708 each carry the phosphoserine modification. Positions 1612-1627 (GRSMSASSGLSARSSA) are enriched in low complexity. Residues 1652–1661 (PSEGSLSSGG) show a composition bias toward low complexity.

This sequence belongs to the protein kinase superfamily. AGC Ser/Thr protein kinase family. DMPK subfamily. In terms of assembly, homodimer and homotetramer via the coiled coil regions. Interacts tightly with GTP-bound but not GDP-bound CDC42. Forms a tripartite complex with MYO18A and LRP35A with the latter acting as an adapter connecting CDC42BPA and MYO18A. LRP35A binding results in activation of CDC42BPA by abolition of its negative autoregulation. Interacts with LURAP1. Interacts (via AGC-kinase C-terminal domain) with FAM89B/LRAP25 (via LRR repeat). Forms a tripartite complex with FAM89B/LRAP25 and LIMK1. Mg(2+) serves as cofactor. In terms of processing, proteolytically cleaved by caspases upon apoptosis induction. The cleavage at Asp-478 by CASP3 increases its kinase activity (in vitro).

Its subcellular location is the cytoplasm. It localises to the cell projection. The protein resides in the lamellipodium. The enzyme catalyses L-seryl-[protein] + ATP = O-phospho-L-seryl-[protein] + ADP + H(+). It catalyses the reaction L-threonyl-[protein] + ATP = O-phospho-L-threonyl-[protein] + ADP + H(+). With respect to regulation, maintained in an inactive, closed conformation by an interaction between the kinase domain and the negative autoregulatory C-terminal coiled-coil region. Agonist binding to the phorbol ester binding site disrupts this, releasing the kinase domain to allow N-terminus-mediated dimerization and kinase activation by transautophosphorylation. Inhibited by chelerythrine chloride. Its function is as follows. Serine/threonine-protein kinase which is an important downstream effector of CDC42 and plays a role in the regulation of cytoskeleton reorganization and cell migration. Regulates actin cytoskeletal reorganization via phosphorylation of PPP1R12C and MYL9/MLC2. In concert with MYO18A and LRP35A, is involved in modulating lamellar actomyosin retrograde flow that is crucial to cell protrusion and migration. Phosphorylates: PPP1R12A and LIMK2. May play a role in TFRC-mediated iron uptake. In concert with FAM89B/LRAP25 mediates the targeting of LIMK1 to the lamellipodium resulting in its activation and subsequent phosphorylation of CFL1 which is important for lamellipodial F-actin regulation. Triggers the formation of an extrusion apical actin ring required for epithelial extrusion of apoptotic cells. The polypeptide is Serine/threonine-protein kinase MRCK alpha (Cdc42bpa) (Mus musculus (Mouse)).